Here is a 103-residue protein sequence, read N- to C-terminus: G0/G1 switch protein 2 (103 aa).

As to quaternary structure, directly interacts with BCL2; this interaction prevents the formation of the anti-apoptotic BAX-BCL2 complex.

Its subcellular location is the mitochondrion. Functionally, promotes apoptosis by binding to BCL2, hence preventing the formation of protective BCL2-BAX heterodimers. In Mus musculus (Mouse), this protein is G0/G1 switch protein 2 (G0s2).